Here is a 522-residue protein sequence, read N- to C-terminus: Putative lipase ATG15 (522 aa).

Topologically, residues 1-5 (MYIPG) are cytoplasmic. The helical; Signal-anchor for type II membrane protein transmembrane segment at 6 to 26 (PLRLSSYLLPFLSSPSPPAQS) threads the bilayer. Over 27 to 522 (SPDTRTISFK…CYKWEFGEWN (496 aa)) the chain is Lumenal. N-linked (GlcNAc...) asparagine glycosylation is found at asparagine 48, asparagine 133, asparagine 196, asparagine 220, asparagine 302, and asparagine 309. Catalysis depends on serine 318, which acts as the Charge relay system. Asparagine 361 is a glycosylation site (N-linked (GlcNAc...) asparagine). A disordered region spans residues 481 to 506 (RRGPKRQPGGEDPGWRKHGGVPKPVS).

This sequence belongs to the AB hydrolase superfamily. Lipase family. As to quaternary structure, binds to both phosphatidylinositol (PI) and phosphatidylinositol 3,5-bisphosphate (PIP2).

The protein localises to the endoplasmic reticulum membrane. It localises to the golgi apparatus membrane. It is found in the endosome. The protein resides in the multivesicular body membrane. Its subcellular location is the prevacuolar compartment membrane. The catalysed reaction is a triacylglycerol + H2O = a diacylglycerol + a fatty acid + H(+). In terms of biological role, lipase which is essential for lysis of subvacuolar cytoplasm to vacuole targeted bodies and intravacuolar autophagic bodies. Involved in the lysis of intravacuolar multivesicular body (MVB) vesicles. The intravacuolar membrane disintegration by ATG15 is critical to life span extension. The polypeptide is Putative lipase ATG15 (ATG15) (Cryptococcus neoformans var. neoformans serotype D (strain JEC21 / ATCC MYA-565) (Filobasidiella neoformans)).